We begin with the raw amino-acid sequence, 412 residues long: Multifunctional CCA protein (412 aa).

Residues Gly8 and Arg11 each coordinate ATP. CTP contacts are provided by Gly8 and Arg11. Mg(2+)-binding residues include Asp21 and Asp23. The ATP site is built by Arg91, Arg137, and Arg140. CTP is bound by residues Arg91, Arg137, and Arg140. The HD domain maps to 228 to 329 (TGIHTLMTLS…VKLFDSIDAW (102 aa)).

Belongs to the tRNA nucleotidyltransferase/poly(A) polymerase family. Bacterial CCA-adding enzyme type 1 subfamily. As to quaternary structure, monomer. Can also form homodimers and oligomers. It depends on Mg(2+) as a cofactor. Ni(2+) is required as a cofactor.

It carries out the reaction a tRNA precursor + 2 CTP + ATP = a tRNA with a 3' CCA end + 3 diphosphate. It catalyses the reaction a tRNA with a 3' CCA end + 2 CTP + ATP = a tRNA with a 3' CCACCA end + 3 diphosphate. Catalyzes the addition and repair of the essential 3'-terminal CCA sequence in tRNAs without using a nucleic acid template. Adds these three nucleotides in the order of C, C, and A to the tRNA nucleotide-73, using CTP and ATP as substrates and producing inorganic pyrophosphate. tRNA 3'-terminal CCA addition is required both for tRNA processing and repair. Also involved in tRNA surveillance by mediating tandem CCA addition to generate a CCACCA at the 3' terminus of unstable tRNAs. While stable tRNAs receive only 3'-terminal CCA, unstable tRNAs are marked with CCACCA and rapidly degraded. In Escherichia coli (strain K12 / MC4100 / BW2952), this protein is Multifunctional CCA protein.